A 2729-amino-acid polypeptide reads, in one-letter code: 3-methylorcinaldehyde synthase (2729 aa).

An N-terminal acylcarrier protein transacylase domain (SAT) region spans residues 99–238; it reads LPAALLIPLA…GTISNLTRQL (140 aa). Polar residues predominate over residues 361–373; sequence SLASTVDINSGNG. Residues 361–391 form a disordered region; the sequence is SLASTVDINSGNGKTRRVKPADAQSSANSTH. Positions 397–828 constitute a Ketosynthase family 3 (KS3) domain; sequence DTDIAIVGMS…GSNASAVLVQ (432 aa). Active-site for beta-ketoacyl synthase activity residues include Cys-571, His-706, and His-748. Residues 942-1230 are malonyl-CoA:ACP transacylase (MAT) domain; the sequence is FGGQVSCFVG…FLEAGTNSSV (289 aa). The active-site For acyl/malonyl transferase activity is Ser-1029. The segment at 1345-1479 is N-terminal hotdog fold; sequence ETILTFHSSD…GTVAFKNPGD (135 aa). One can recognise a PKS/mFAS DH domain in the interval 1345-1669; it reads ETILTFHSSD…YVKIARPSME (325 aa). The interval 1374–1665 is product template (PT) domain; it reads KQLLRGHMTL…LGIAYVKIAR (292 aa). His-1380 (proton acceptor; for dehydratase activity) is an active-site residue. The C-terminal hotdog fold stretch occupies residues 1513–1669; the sequence is DEMLGNQSIY…YVKIARPSME (157 aa). The Proton donor; for dehydratase activity role is filled by Asp-1575. Positions 1682–1701 are enriched in low complexity; it reads AGGKTTPQTATKPAAAPVVA. A disordered region spans residues 1682–1726; it reads AGGKTTPQTATKPAAAPVVADHTPRTTESASTVNGVNLDDRKPEG. The segment covering 1707–1716 has biased composition (polar residues); the sequence is TTESASTVNG. In terms of domain architecture, Carrier spans 1750-1824; sequence QDMIARVKAV…GLLQCVAGAL (75 aa). O-(pantetheine 4'-phosphoryl)serine is present on Ser-1784. The segment covering 1835-1868 has biased composition (low complexity); the sequence is TLTASSDSGINSAKSSILSGTSTSTSTGTTDTGS. Positions 1835–1874 are disordered; that stretch reads TLTASSDSGINSAKSSILSGTSTSTSTGTTDTGSDVGQSM. Residues 2086-2254 form a methyltransferase (C-MeT) domain region; sequence EINPLRIMET…GYVDWTEGMT (169 aa). The reductase (R) domain stretch occupies residues 2344–2599; sequence ITGGTGGLGA…GWTPADYVAR (256 aa).

The protein operates within secondary metabolite biosynthesis; terpenoid biosynthesis. Non-reducing polyketide synthase; part of the gene cluster that mediates the biosynthesis of xenovulene A, an unusual meroterpenoid that has potent inhibitory effects on the human gamma-aminobutyrate A (GABAA) benzodiazepine receptor. The first step of xenovulene A biosynthesis is the biosynthesis of 3-methylorcinaldehyde performed by the non-reducing polyketide synthase aspks1. The salicylate hydroxylase asL1 then catalyzes the oxidative dearomatization of 3-methylorcinaldehyde to yield a dearomatized hydroxycyclohexadione. The 2-oxoglutarate-dependent dioxygenase asL3 further catalyzes the oxidative ring expansion to provide the first tropolone metabolite. The cytochrome P450 monooxygenase asR2 allows the synthesis of tropolone hemiacetal. In parallel, a previously unrecognised class of terpene cyclase, asR6, produces alpha-humulene from farnesylpyrophosphate (FPP). The putative Diels-Alderase asR5 probably catalyzes the formation of the tropolone-humulene skeleton by linking humulene and the polyketide moiety. Oxidative-ring contractions catalyzed by asL4 and asL6 then processively remove carbon atoms from the polyketide to yield xenovulene A. The polypeptide is 3-methylorcinaldehyde synthase (Sarocladium schorii (Acremonium strictum (strain IMI 501407))).